Reading from the N-terminus, the 211-residue chain is CASP-like protein 3A1 (211 aa).

Residues 1-45 (MGSIGNGRSDSVVGIQMPPAGSKMVLEPEALQVTTSPVPRWPRLG) are Cytoplasmic-facing. Residues 46-66 (VVMVATRAVAMVMALLSMSLM) form a helical membrane-spanning segment. Residues 67–95 (VSSKQRGILTIFGIEIPLDANWSFSYSLQ) lie on the Extracellular side of the membrane. An N-linked (GlcNAc...) asparagine glycan is attached at Asn-87. A helical membrane pass occupies residues 96 to 116 (FLVAMSTASAAYSLAQLLLIA). Residues 117-131 (HKAVKKSPIVPSRRH) lie on the Cytoplasmic side of the membrane. The helical transmembrane segment at 132 to 152 (AWLLFAGDQVFSLAMMSAGSA) threads the bilayer. Over 153 to 186 (AAAVANLNRTGIRHTALPNFCKPLPRFCDLSAVS) the chain is Extracellular. The N-linked (GlcNAc...) asparagine glycan is linked to Asn-160. The chain crosses the membrane as a helical span at residues 187 to 207 (IACAFLSCVFLAASAVIDVIW). Residues 208 to 211 (LSSP) are Cytoplasmic-facing.

The protein belongs to the Casparian strip membrane proteins (CASP) family. Homodimer and heterodimers.

It is found in the cell membrane. In Sorghum bicolor (Sorghum), this protein is CASP-like protein 3A1.